A 480-amino-acid polypeptide reads, in one-letter code: Histone-lysine N-methyltransferase ASHR1 (480 aa).

Residues 11-248 (RCLGVSNLPQ…KDSEITISYI (238 aa)) enclose the SET domain. Positions 56, 59, 68, 71, 77, 81, 89, and 93 each coordinate Zn(2+). An MYND-type zinc finger spans residues 56–93 (CDGCFKTNNLKKCSACQVVWYCGSSCQKSEWKLHRDEC).

Belongs to the class V-like SAM-binding methyltransferase superfamily. Histone-lysine methyltransferase family. SET2 subfamily.

The protein resides in the nucleus. Its subcellular location is the chromosome. The catalysed reaction is L-lysyl-[histone] + S-adenosyl-L-methionine = N(6)-methyl-L-lysyl-[histone] + S-adenosyl-L-homocysteine + H(+). Histone methyltransferase. The chain is Histone-lysine N-methyltransferase ASHR1 (ASHR1) from Arabidopsis thaliana (Mouse-ear cress).